A 278-amino-acid polypeptide reads, in one-letter code: 3-methyl-2-oxobutanoate hydroxymethyltransferase (278 aa).

2 residues coordinate Mg(2+): Asp-43 and Asp-82. 3-methyl-2-oxobutanoate-binding positions include 43–44 (DS), Asp-82, and Lys-112. Position 114 (Glu-114) interacts with Mg(2+). The active-site Proton acceptor is Glu-181.

Belongs to the PanB family. In terms of assembly, homodecamer; pentamer of dimers. The cofactor is Mg(2+).

The protein localises to the cytoplasm. The catalysed reaction is 3-methyl-2-oxobutanoate + (6R)-5,10-methylene-5,6,7,8-tetrahydrofolate + H2O = 2-dehydropantoate + (6S)-5,6,7,8-tetrahydrofolate. The protein operates within cofactor biosynthesis; (R)-pantothenate biosynthesis; (R)-pantoate from 3-methyl-2-oxobutanoate: step 1/2. Functionally, catalyzes the reversible reaction in which hydroxymethyl group from 5,10-methylenetetrahydrofolate is transferred onto alpha-ketoisovalerate to form ketopantoate. This is 3-methyl-2-oxobutanoate hydroxymethyltransferase from Desulfitobacterium hafniense (strain Y51).